A 183-amino-acid chain; its full sequence is Non-specific lipid transfer protein GPI-anchored 15 (183 aa).

A signal peptide spans 1 to 24; it reads MGYRRSYAITFVALVAALWSVTKA. 4 cysteine pairs are disulfide-bonded: cysteine 30–cysteine 71, cysteine 40–cysteine 55, cysteine 56–cysteine 97, and cysteine 69–cysteine 107. N-linked (GlcNAc...) asparagine glycosylation is found at asparagine 47 and asparagine 86. The disordered stretch occupies residues 108-158; the sequence is NAATGPTAQPPAPSPTEKTPDVTLTPTSLPGARSGVGGGSKTVPSVGTGSS. Over residues 149–158 the composition is skewed to polar residues; that stretch reads TVPSVGTGSS. Serine 158 carries GPI-anchor amidated serine lipidation. Residues 159–183 constitute a propeptide, removed in mature form; that stretch reads SRNVDPLPLHFLMFAVLVVCTSSFL.

The protein belongs to the plant LTP family. As to expression, expressed in seedlings, preferentially in the endodermis of hypocotyls and roots. Also observed in siliques.

The protein resides in the cell membrane. Functionally, probable lipid transfer protein. This Arabidopsis thaliana (Mouse-ear cress) protein is Non-specific lipid transfer protein GPI-anchored 15.